The primary structure comprises 159 residues: Cyclic pyranopterin monophosphate synthase (159 aa).

Substrate-binding positions include 75–77 (LCH) and 113–114 (ME). The active site involves aspartate 128.

This sequence belongs to the MoaC family. As to quaternary structure, homohexamer; trimer of dimers.

It catalyses the reaction (8S)-3',8-cyclo-7,8-dihydroguanosine 5'-triphosphate = cyclic pyranopterin phosphate + diphosphate. It participates in cofactor biosynthesis; molybdopterin biosynthesis. In terms of biological role, catalyzes the conversion of (8S)-3',8-cyclo-7,8-dihydroguanosine 5'-triphosphate to cyclic pyranopterin monophosphate (cPMP). The chain is Cyclic pyranopterin monophosphate synthase from Vibrio atlanticus (strain LGP32) (Vibrio splendidus (strain Mel32)).